The primary structure comprises 313 residues: Phosphoenolpyruvate phosphomutase (313 aa).

Asp-69 functions as the Nucleophile in the catalytic mechanism.

It belongs to the isocitrate lyase/PEP mutase superfamily. PEP mutase family.

It catalyses the reaction phosphoenolpyruvate + H(+) = 3-phosphonopyruvate. Its pathway is secondary metabolite biosynthesis; bialaphos biosynthesis. Its function is as follows. Formation of a carbon-phosphorus bond by converting phosphoenolpyruvate (PEP) to phosphonopyruvate (P-Pyr). The chain is Phosphoenolpyruvate phosphomutase (bcpB) from Streptomyces hygroscopicus.